The following is a 365-amino-acid chain: MNKIAPAEIASMLNDWYLAIKKHEVEESSRLFEEVKPLLDDMEEDQEVLAYFSLLELRHKVLLHEARGQGFQHEEPSHMNATSDMLKYYFFLFEGMYEAYKNNYDIAIGLYKDAEQYLDNIPDPIEKAEFHLKVGKLYYKLGQNIVSLNHTRQAVKTFREETDYKKKLASALITMSGNFTEMSQFEEAEAYLDEAIRITSELEDHFFEAQLLHNFGLLHAQSGKSEEAVSKLEEALQNDEYARSAYYYHSAYLLIRELFKIKKKEQALSYYQDVKEKLTAEPNRICEAKIDILYAIYAEGGHAETFHLCKQHMDDLLSEKEYDSVRELSILAGERYRELELYKEAAHFFYEALQIEELIKRTEVI.

5 TPR repeats span residues 135–168 (GKLY…KKKL), 169–202 (ASAL…TSEL), 209–242 (AQLL…DEYA), 244–284 (SAYY…EPNR), and 326–359 (RELS…EELI).

It belongs to the Rap family.

It localises to the cytoplasm. With respect to regulation, inhibited by PhrG. Its function is as follows. Involved in the regulation of expression of DegU-controlled genes. Inhibits the binding of DegU to the promoter regions of aprE, coding for an extracellular alkaline protease, and comK, a master regulator for development of genetic competence. RapG does not stimulate dephosphorylation of DegU-P. This chain is Regulatory protein RapG (rapG), found in Bacillus subtilis (strain 168).